Consider the following 155-residue polypeptide: Small ribosomal subunit protein uS7cz/uS7cy (155 aa).

This sequence belongs to the universal ribosomal protein uS7 family. As to quaternary structure, part of the 30S ribosomal subunit.

The protein resides in the plastid. It localises to the chloroplast. Its function is as follows. One of the primary rRNA binding proteins, it binds directly to 16S rRNA where it nucleates assembly of the head domain of the 30S subunit. In Cucumis sativus (Cucumber), this protein is Small ribosomal subunit protein uS7cz/uS7cy (rps7-A).